Consider the following 697-residue polypeptide: General transcription factor IIH subunit 1 (697 aa).

Over residues 115–136 (LPVSASNGSNTTSPTNGTSPIN) the composition is skewed to low complexity. 2 disordered regions span residues 115-141 (LPVS…TSPT) and 228-250 (KNDS…ADVR). BSD domains lie at 174–231 (LSKL…KNDS) and 255–307 (TPNA…YFYR). Basic and acidic residues predominate over residues 412–422 (KNLKKTKKDEN). Residues 412–462 (KNLKKTKKDENSTSTPTTTTTTTNTTNTTNTTTTTTTNNTTIKDPNLYNGD) form a disordered region. Positions 423–452 (STSTPTTTTTTTNTTNTTNTTTTTTTNNTT) are enriched in low complexity.

It belongs to the TFB1 family. As to quaternary structure, component of the 7-subunit TFIIH core complex composed of XPB/repB, XPD/repD, gtf2h1, gtf2h2, gtf2h3, gtf2h4 and gtf2h5, which is active in NER. The core complex associates with the 3-subunit CDK-activating kinase (CAK) module composed of cycH/cyclin H, cdk7 and mnat1 to form the 10-subunit holoenzyme (holo-TFIIH) active in transcription.

Its subcellular location is the nucleus. Functionally, component of the general transcription and DNA repair factor IIH (TFIIH) core complex, which is involved in general and transcription-coupled nucleotide excision repair (NER) of damaged DNA and, when complexed to CAK, in RNA transcription by RNA polymerase II. In NER, TFIIH acts by opening DNA around the lesion to allow the excision of the damaged oligonucleotide and its replacement by a new DNA fragment. In transcription, TFIIH has an essential role in transcription initiation. When the pre-initiation complex (PIC) has been established, TFIIH is required for promoter opening and promoter escape. Phosphorylation of the C-terminal tail (CTD) of the largest subunit of RNA polymerase II by the kinase module CAK controls the initiation of transcription. This is General transcription factor IIH subunit 1 (gtf2h1) from Dictyostelium discoideum (Social amoeba).